The primary structure comprises 357 residues: MTKSYSESGLMGEPQPQGPPSWTDECLSSQDEEHEADKKEDELEAMNAEEDSLRNGGEEEEEDEDLEEEEEEEEEEEDQKPKRRGPKKKKMTKARLERFKLRRMKANARERNRMHGLNAALDNLRKVVPCYSKTQKLSKIETLRLAKNYIWALSEILRSGKSPDLVSFVQTLCKGLSQPTTNLVAGCLQLNPRTFLPEQNPDMPPHLPTASASFPVHPYSYQSPGLPSPPYGTMDSSHVFHVKPPPHAYSAALEPFFESPLTDCTSPSFDGPLSPPLSINGNFSFKHEPSAEFEKNYAFTMHYPAATLAGPQSHGSIFSSGAAAPRCEIPIDNIMSFDSHSHHERVMSAQLNAIFHD.

The tract at residues 1 to 94 (MTKSYSESGL…GPKKKKMTKA (94 aa)) is disordered. Residues 58 to 78 (EEEEEDEDLEEEEEEEEEEED) are compositionally biased toward acidic residues. Basic residues predominate over residues 81–93 (PKRRGPKKKKMTK). The Nuclear localization signal motif lies at 87–93 (KKKKMTK). In terms of domain architecture, bHLH spans 101 to 153 (LRRMKANARERNRMHGLNAALDNLRKVVPCYSKTQKLSKIETLRLAKNYIWAL). 4 positions are modified to phosphoserine: serine 162, serine 259, serine 266, and serine 274. Position 336 is a phosphoserine; by CaMK2 (serine 336).

In terms of assembly, efficient DNA-binding requires dimerization with another bHLH protein. Heterodimer with TCF3/E47; the heterodimer is inhibited in presence of ID2, but not NR0B2, to E-box element. Interacts with EP300; the interaction is inhibited by NR0B2. Interacts with RREB1. Interacts with ATOH8. In islet cells, phosphorylated on Ser-274 upon glucose stimulation; which may be required for nuclear localization. In activated neurons, phosphorylated on Ser-336; which promotes dendritic growth. Phosphorylated by MAPK1; phosphorylation regulates heterodimerization and DNA-binding activities. Phosphorylation on Ser-266 and Ser-274 increases transactivation on the insulin promoter in glucose-stimulated insulinoma cells. Expressed in pancreatic beta cells, pulmonary neuroendocrine cells and retinal interneurons amacrine cells (at protein level). Expressed in endocrine cells of the pancreas. Expressed in the inner layer of cerebellar external granular layer (EGL). Expressed in the Ammon's horn (AH), which includes the CA1-CA3 pyramidal layer and in granule cells of the dentate gyrus (DG). Expressed in photoreceptors of the outer nuclear layer (ONL), in a subset of cells in the lower half of the inner nuclear layer (INL), and in a subset of cells in the ganglion cell layer (GCL) of the retina. Expressed in cholinergic and AII amacrine cell types. Expressed in differentiating neurons of both the central and peripheral nervous systems.

It localises to the cytoplasm. The protein resides in the nucleus. Acts as a transcriptional activator: mediates transcriptional activation by binding to E box-containing promoter consensus core sequences 5'-CANNTG-3'. Associates with the p300/CBP transcription coactivator complex to stimulate transcription of the secretin gene as well as the gene encoding the cyclin-dependent kinase inhibitor CDKN1A. Contributes to the regulation of several cell differentiation pathways, like those that promote the formation of early retinal ganglion cells, inner ear sensory neurons, granule cells forming either the cerebellum or the dentate gyrus cell layer of the hippocampus, endocrine islet cells of the pancreas and enteroendocrine cells of the small intestine. Together with PAX6 or SIX3, is required for the regulation of amacrine cell fate specification. Also required for dendrite morphogenesis and maintenance in the cerebellar cortex. Associates with chromatin to enhancer regulatory elements in genes encoding key transcriptional regulators of neurogenesis. The chain is Neurogenic differentiation factor 1 (Neurod1) from Mus musculus (Mouse).